The following is an 833-amino-acid chain: Toll-like receptor 4 (833 aa).

A signal peptide spans 1–23 (MMPPTRLAGTLIPAMAFLSCLRP). Residues 24–54 (ESWDPCVEVVPNITYQCMDLNLHKIPDNIPS) form the LRRNT domain. Residues 24-632 (ESWDPCVEVV…FRNATCQVRK (609 aa)) are Extracellular-facing. Cys-29 and Cys-40 are disulfide-bonded. Asn-35 carries N-linked (GlcNAc...) asparagine glycosylation. 5 LRR repeats span residues 55-76 (STKD…SFSN), 79-100 (ELQV…AYQG), 103-124 (HLSI…AFSG), 127-148 (SLQT…PIGH), and 151-172 (TLKE…EYFS). Asn-173 carries an N-linked (GlcNAc...) asparagine glycan. LRR repeat units follow at residues 176 to 197 (NLEY…DLQV), 205 to 225 (NLSL…AFKE), and 227 to 236 (KLRELTLRSN). Residue Asn-205 is glycosylated (N-linked (GlcNAc...) asparagine). The N-linked (GlcNAc...) asparagine glycan is linked to Asn-238. A disulfide bridge connects residues Cys-281 and Cys-306. Asn-309 carries N-linked (GlcNAc...) asparagine glycosylation. 9 LRR repeats span residues 352-373 (PLKE…VKLE), 374-394 (SLEF…CSER), 400-420 (RLKH…NFLG), 423-444 (QLEY…SVFL), 448-456 (NLRYLDISY), 472-495 (SLQI…FMEL), 497-518 (NLTI…AFNS), 521-542 (KLQL…PYEP), and 545-565 (SLQT…QELR). A disulfide bridge connects residues Cys-390 and Cys-391. N-linked (GlcNAc...) asparagine glycosylation is found at Asn-497 and Asn-526. 2 N-linked (GlcNAc...) asparagine glycosylation sites follow: Asn-570 and Asn-575. The LRRCT domain maps to 579 to 630 (NDFACVCEHQSFLQWVKDQRQLLVEVEQMVCAKPLDMQGMPMLNFRNATCQV). 2 disulfide bridges follow: Cys-583-Cys-609 and Cys-585-Cys-628. A glycan (N-linked (GlcNAc...) asparagine) is linked at Asn-625. Residues 633–653 (TIITGSVFTVLLVFLVVVLVY) form a helical membrane-spanning segment. At 654–833 (KFYFHLMLLA…PEGMADAEGS (180 aa)) the chain is on the cytoplasmic side. The 144-residue stretch at 673–816 (STYDAFVIYS…IFWRRLRKAL (144 aa)) folds into the TIR domain.

The protein belongs to the Toll-like receptor family. Belongs to the lipopolysaccharide (LPS) receptor, a multi-protein complex containing at least CD14, LY96 and TLR4. Binding to bacterial LPS leads to homodimerization. Interacts with LY96 via the extracellular domain. Interacts with MYD88 and TIRAP via their respective TIR domains. Interacts with TICAM2. Interacts with NOX4. Interacts with CNPY3 and HSP90B1; this interaction is required for proper folding in the endoplasmic reticulum. Interacts with MAP3K21; this interaction leads to negative regulation of TLR4 signaling. Interacts with CD36, following CD36 stimulation by oxLDL or amyloid-beta 42, and forms a heterodimer with TLR6. The trimeric complex is internalized and triggers inflammatory response. LYN kinase activity facilitates TLR4-TLR6 heterodimerization and signal initiation. Interacts with TICAM1 in response to LPS in a WDFY1-dependent manner. Interacts with WDFY1 in response to LPS. Interacts with SMPDL3B. Interacts with CEACAM1; upon lipopolysaccharide stimulation, forms a complex including TLR4 and the phosphorylated form of SYK and CEACAM1, which in turn, recruits PTPN6 that dephosphorylates SYK, reducing the production of reactive oxygen species (ROS) and lysosome disruption, which in turn, reduces the activity of the inflammasome. Interacts with RFTN1; the interaction occurs in response to lipopolysaccharide stimulation. Interacts with SCIMP; the interaction occurs in response to lipopolysaccharide stimulation and is enhanced by phosphorylation of SCIMP by LYN. This interaction facilitates the phosphorylation of TLR4 by LYN which elicits a selective cytokine response in macrophages. Interacts with TRAF3IP3. Interacts with TREM1; this interaction enhances TLR4-mediated inflammatory response. Interacts with ZG16B/PAUF. Interacts with CD82; this interaction inhibits TLR4-mediated signaling pathway. Post-translationally, phosphorylated on tyrosine residues by LYN after binding lipopolysaccharide. In terms of processing, ubiquitinated by RNF128 via 'Lys-28'-linked polyubiquitin chains, leading to proteasomal degradation.

The protein resides in the cell membrane. It localises to the early endosome. The protein localises to the cell projection. Its subcellular location is the ruffle. Transmembrane receptor that functions as a pattern recognition receptor recognizing pathogen- and damage-associated molecular patterns (PAMPs and DAMPs) to induce innate immune responses via downstream signaling pathways. At the plasma membrane, cooperates with LY96 to mediate the innate immune response to bacterial lipopolysaccharide (LPS). Also involved in LPS-independent inflammatory responses triggered by free fatty acids, such as palmitate, and Ni(2+). Mechanistically, acts via MYD88, TIRAP and TRAF6, leading to NF-kappa-B activation, cytokine secretion and the inflammatory response. Alternatively, CD14-mediated TLR4 internalization via endocytosis is associated with the initiation of a MYD88-independent signaling via the TICAM1-TBK1-IRF3 axis leading to type I interferon production. In addition to the secretion of proinflammatory cytokines, initiates the activation of NLRP3 inflammasome and formation of a positive feedback loop between autophagy and NF-kappa-B signaling cascade. In complex with TLR6, promotes inflammation in monocytes/macrophages by associating with TLR6 and the receptor CD86. Upon ligand binding, such as oxLDL or amyloid-beta 42, the TLR4:TLR6 complex is internalized and triggers inflammatory response, leading to NF-kappa-B-dependent production of CXCL1, CXCL2 and CCL9 cytokines, via MYD88 signaling pathway, and CCL5 cytokine, via TICAM1 signaling pathway. In myeloid dendritic cells, vesicular stomatitis virus glycoprotein G but not LPS promotes the activation of IRF7, leading to type I IFN production in a CD14-dependent manner. The polypeptide is Toll-like receptor 4 (TLR4) (Felis catus (Cat)).